We begin with the raw amino-acid sequence, 217 residues long: Adenylate kinase (217 aa).

Residue 10-15 (GAGKGT) coordinates ATP. An NMP region spans residues 30 to 59 (STGDIFRKNISDKTPLGIEAKEYLDKGQLV). AMP-binding positions include threonine 31, arginine 36, 57 to 59 (QLV), 85 to 88 (GFPR), and glutamine 92. The tract at residues 126 to 163 (GRRICPSCGASYHVKFNPPKLKDKCDICNNDIIQRKDD) is LID. Arginine 127 serves as a coordination point for ATP. Cysteine 130 and cysteine 133 together coordinate Zn(2+). 136 to 137 (SY) is a binding site for ATP. Zn(2+) contacts are provided by cysteine 150 and cysteine 153. Arginine 160 and arginine 171 together coordinate AMP. Glycine 199 contacts ATP.

It belongs to the adenylate kinase family. In terms of assembly, monomer.

It is found in the cytoplasm. The enzyme catalyses AMP + ATP = 2 ADP. Its pathway is purine metabolism; AMP biosynthesis via salvage pathway; AMP from ADP: step 1/1. Functionally, catalyzes the reversible transfer of the terminal phosphate group between ATP and AMP. Plays an important role in cellular energy homeostasis and in adenine nucleotide metabolism. In Clostridium kluyveri (strain NBRC 12016), this protein is Adenylate kinase.